We begin with the raw amino-acid sequence, 507 residues long: Lysine--tRNA ligase (507 aa).

Positions 416 and 423 each coordinate Mg(2+).

The protein belongs to the class-II aminoacyl-tRNA synthetase family. Homodimer. It depends on Mg(2+) as a cofactor.

Its subcellular location is the cytoplasm. The catalysed reaction is tRNA(Lys) + L-lysine + ATP = L-lysyl-tRNA(Lys) + AMP + diphosphate. The protein is Lysine--tRNA ligase of Hahella chejuensis (strain KCTC 2396).